A 59-amino-acid polypeptide reads, in one-letter code: Large ribosomal subunit protein bL33 (59 aa).

Belongs to the bacterial ribosomal protein bL33 family.

The sequence is that of Large ribosomal subunit protein bL33 from Prosthecochloris aestuarii (strain DSM 271 / SK 413).